The chain runs to 244 residues: tRNA (guanine-N(1)-)-methyltransferase (244 aa).

Residues Gly112 and 132–137 (IGDYIL) each bind S-adenosyl-L-methionine.

The protein belongs to the RNA methyltransferase TrmD family. As to quaternary structure, homodimer.

It is found in the cytoplasm. It carries out the reaction guanosine(37) in tRNA + S-adenosyl-L-methionine = N(1)-methylguanosine(37) in tRNA + S-adenosyl-L-homocysteine + H(+). Functionally, specifically methylates guanosine-37 in various tRNAs. This is tRNA (guanine-N(1)-)-methyltransferase from Geobacillus kaustophilus (strain HTA426).